The sequence spans 335 residues: Methylthioribose-1-phosphate isomerase (335 aa).

Substrate is bound by residues 43-45 (RGA), Arg86, and Gln193. The Proton donor role is filled by Asp234. 244 to 245 (NK) provides a ligand contact to substrate.

It belongs to the eIF-2B alpha/beta/delta subunits family. MtnA subfamily.

It catalyses the reaction 5-(methylsulfanyl)-alpha-D-ribose 1-phosphate = 5-(methylsulfanyl)-D-ribulose 1-phosphate. Its pathway is amino-acid biosynthesis; L-methionine biosynthesis via salvage pathway; L-methionine from S-methyl-5-thio-alpha-D-ribose 1-phosphate: step 1/6. Its function is as follows. Catalyzes the interconversion of methylthioribose-1-phosphate (MTR-1-P) into methylthioribulose-1-phosphate (MTRu-1-P). The sequence is that of Methylthioribose-1-phosphate isomerase from Parabacteroides distasonis (strain ATCC 8503 / DSM 20701 / CIP 104284 / JCM 5825 / NCTC 11152).